Consider the following 534-residue polypeptide: Prolyl 4-hydroxylase subunit alpha-2 (534 aa).

Positions 1 to 21 are cleaved as a signal peptide; sequence MKPWLCLVFFTSAFLIWHAEA. Asparagine 115 is a glycosylation site (N-linked (GlcNAc...) asparagine). One copy of the TPR repeat lies at 207–240; the sequence is VEILDYLSYAVFQFGDLHRAMELTRRLISLDSTH. Asparagine 263 carries N-linked (GlcNAc...) asparagine glycosylation. The Fe2OG dioxygenase domain maps to 413–519; it reads TAELLQVANY…KWVSNKWFHE (107 aa). Fe cation-binding residues include histidine 431, aspartate 433, and histidine 500. 2-oxoglutarate is bound at residue lysine 510.

Belongs to the P4HA family. Heterotetramer of two alpha-2 chains and two beta chains (the beta chain is the multi-functional PDI). Fe(2+) serves as cofactor. The cofactor is L-ascorbate.

Its subcellular location is the endoplasmic reticulum lumen. The catalysed reaction is L-prolyl-[collagen] + 2-oxoglutarate + O2 = trans-4-hydroxy-L-prolyl-[collagen] + succinate + CO2. Catalyzes the post-translational formation of 4-hydroxyproline in -Xaa-Pro-Gly- sequences in collagens and other proteins. The polypeptide is Prolyl 4-hydroxylase subunit alpha-2 (P4HA2) (Gallus gallus (Chicken)).